A 409-amino-acid polypeptide reads, in one-letter code: MSDNSPITSITAASLQPELWTSSSNDALQIYITDSDGTALNFHPNFTYPIFGDSEQIFGYRDLVIFLCFDHCTFYPFLNVKYSDKLNDDTLEDPREKLLSYLPESTIFKDEVKWVDSINKEKEGFEIPGELVGNIFTHGDDKFGIYKLDLKNAQGLELHKRLQILVLLFIEAGSYIDHQDELWDIYVMYKVTDEKTPSIIGFCTAYNYWKYGGFEKFDSNQQEVRKKISQFIVLPMYQGLKLGGRFYNKLYEYWMQDPRVIEVVVEDPSESFDDLRDRCDLTRLCQNTIKVASVDLPLINTEWATKLRQEQKLEKRQFSRLLEMILIYQLEHNLTNITKKQVRLFIKKRLYEKNKEILDGLDEPTRLDKLQTAYASLESDYKRILSGLSLHKRALDSTEGSSKKSKPNV.

2 interaction with histone H4 N-terminus regions span residues 53 to 55 (DSE) and 206 to 208 (YNY). Acetyl-CoA contacts are provided by residues 231-233 (FIV) and 238-244 (QGLKLGG). Catalysis depends on glutamate 266, which acts as the Proton donor/acceptor.

The protein belongs to the HAT1 family. In terms of assembly, component of the HAT-B complex composed of at least HAT1 and HAT2. The HAT-B complex binds to histone H4 tail.

It localises to the cytoplasm. The protein localises to the nucleus. The enzyme catalyses L-lysyl-[protein] + acetyl-CoA = N(6)-acetyl-L-lysyl-[protein] + CoA + H(+). Functionally, catalytic component of the histone acetylase B (HAT-B) complex. Acetylates 'Lys-12' of histone H4 which is required for telomeric silencing. Has intrinsic substrate specificity that modifies lysine in recognition sequence GXGKXG. Involved in DNA double-strand break repair. In Debaryomyces hansenii (strain ATCC 36239 / CBS 767 / BCRC 21394 / JCM 1990 / NBRC 0083 / IGC 2968) (Yeast), this protein is Histone acetyltransferase type B catalytic subunit (HAT1).